The primary structure comprises 235 residues: Ubiquinone/menaquinone biosynthesis C-methyltransferase UbiE (235 aa).

Residues T60, D81, and S126 each coordinate S-adenosyl-L-methionine.

It belongs to the class I-like SAM-binding methyltransferase superfamily. MenG/UbiE family.

The enzyme catalyses a 2-demethylmenaquinol + S-adenosyl-L-methionine = a menaquinol + S-adenosyl-L-homocysteine + H(+). It catalyses the reaction a 2-methoxy-6-(all-trans-polyprenyl)benzene-1,4-diol + S-adenosyl-L-methionine = a 5-methoxy-2-methyl-3-(all-trans-polyprenyl)benzene-1,4-diol + S-adenosyl-L-homocysteine + H(+). It participates in quinol/quinone metabolism; menaquinone biosynthesis; menaquinol from 1,4-dihydroxy-2-naphthoate: step 2/2. Its pathway is cofactor biosynthesis; ubiquinone biosynthesis. Methyltransferase required for the conversion of demethylmenaquinol (DMKH2) to menaquinol (MKH2) and the conversion of 2-polyprenyl-6-methoxy-1,4-benzoquinol (DDMQH2) to 2-polyprenyl-3-methyl-6-methoxy-1,4-benzoquinol (DMQH2). The protein is Ubiquinone/menaquinone biosynthesis C-methyltransferase UbiE of Geobacter sp. (strain M21).